We begin with the raw amino-acid sequence, 470 residues long: MSYANNNGSLSVPQYISTIDLTTETKPKFVKYFYYTVFNFAKQYTNPLILPFPITLEIIYHGDIDIGANLFSSKTFAVEEVSGSKFHISGQGTAYFWYRYGHIDPASFDLIAQTAISNKDWLVLDAILHTRSFIEAIDFLVNNPQTWTIIAEGLDWQLNEIGARDLFAYLTNNSYDTRKLAQFLTILAYIDPDVLVKVGIPVYTCDNPNKTFEKYLNYLPASPLVPIYSELSEQSSEISELFIQTSELSDDVLALMAQIVKIYYQLSEQQSEISELNIESLIHSSEITQLFFITSEQSFQISDLFTETSEIIFNLDQLSENLILFTNAGQIINNFLKMVHLFKAVLIILKILQHAVKTIAPVSELGILTDLGQLLDNILGMTSESIFYYTSELDIRGIIQTLVNLINQLLGINITLSSECCEEQEEKEKKKEKEKEKKKEKDDDDDQQNNNNNDQNGLGLGLGLNFGLNL.

Residues 418–453 are a coiled coil; the sequence is SECCEEQEEKEKKKEKEKEKKKEKDDDDDQQNNNNN. The segment at 423 to 470 is disordered; that stretch reads EQEEKEKKKEKEKEKKKEKDDDDDQQNNNNNDQNGLGLGLGLNFGLNL. Basic and acidic residues predominate over residues 426–441; it reads EKEKKKEKEKEKKKEK. The span at 448 to 457 shows a compositional bias: low complexity; that stretch reads QNNNNNDQNG.

This is an uncharacterized protein from Acidianus bottle-shaped virus (isolate Italy/Pozzuoli) (ABV).